We begin with the raw amino-acid sequence, 339 residues long: Ubiquitin carboxyl-terminal hydrolase 50 (339 aa).

The 296-residue stretch at 44 to 339 (TGLWNLGNTC…AFCKNSVTQA (296 aa)) folds into the USP domain. Catalysis depends on C53, which acts as the Nucleophile. Catalysis depends on H327, which acts as the Proton acceptor.

It belongs to the peptidase C19 family. As to expression, weakly expressed in a few tissues.

It localises to the cytoplasm. It is found in the cytoskeleton. The protein resides in the microtubule organizing center. Its subcellular location is the centrosome. The protein localises to the nucleus. It carries out the reaction Thiol-dependent hydrolysis of ester, thioester, amide, peptide and isopeptide bonds formed by the C-terminal Gly of ubiquitin (a 76-residue protein attached to proteins as an intracellular targeting signal).. Its function is as follows. Deubiquitinating enzyme that removes conjugated ubiquitin from specific proteins to regulate different cellular processes. Regulates the inflammasome signaling pathway by deubiquitinating 'Lys-63'-linked polyubiquitination of the PYCARD/ASC adapter protein. Regulates the ubiquitination and stability of the ACE2 protein. Acts as a negative regulator of the G2/M checkpoint pathway, by preventing serine/threonine kinase WEE1 degradation, thereby repressing entry into mitosis following activation of the G2/M DNA damage checkpoint. The sequence is that of Ubiquitin carboxyl-terminal hydrolase 50 from Homo sapiens (Human).